The sequence spans 538 residues: Pentatricopeptide repeat-containing protein At1g33350 (538 aa).

10 PPR repeats span residues 87–123, 125–159, 160–191, 192–226, 227–253, 259–293, 294–324, 325–359, 363–398, and 399–433; these read NTHL…SVPR, NHFI…GFHL, YVVV…MSER, NVVS…DVPS, WNAI…MINE, NEVT…DLSS, DVFV…ASKK, SLTA…NIND, DHIT…GIEP, and RIEH…ADEA. Residues 434–509 are type E motif; that stretch reads IWGSLLNACK…PPGWSRIEID (76 aa).

Belongs to the PPR family. PCMP-E subfamily.

In Arabidopsis thaliana (Mouse-ear cress), this protein is Pentatricopeptide repeat-containing protein At1g33350 (PCMP-E57).